Reading from the N-terminus, the 738-residue chain is Ent-kaurene synthase-like 1 (738 aa).

Mg(2+)-binding residues include D487, D491, N631, D632, and E639. Residues D487–D491 carry the DDXXD motif motif.

This sequence belongs to the terpene synthase family. The cofactor is Mg(2+).

It carries out the reaction ent-copalyl diphosphate = ent-kaur-16-ene + diphosphate. Its pathway is secondary metabolite biosynthesis; terpenoid biosynthesis. Functionally, diterpene cyclase involved in the biosynthesis of labdane-related diterpenoids (LRDs) natural products. Catalyzes the cyclization of ent-CDP into ent-kaurene. This Ricinus communis (Castor bean) protein is Ent-kaurene synthase-like 1.